We begin with the raw amino-acid sequence, 349 residues long: Transcription initiation factor TFIID subunit 7 (349 aa).

The [KR]-[STA]-K motif signature appears at 3–5 (KSK). Residues 105 to 126 (PPVEEPVASTDPKASKKKDKDK) form a disordered region. Serine 171, serine 200, serine 201, and serine 213 each carry phosphoserine. Residues 186–212 (EDETKEAENQGLDISSPGMSGHRQGHD) form a disordered region. The segment at 227 to 247 (SSSSEDEDETQHQDEEDINII) is disordered. Positions 230-247 (SEDEDETQHQDEEDINII) are enriched in acidic residues. Residues 244–349 (INIIDTEEDL…QEELESLLEK (106 aa)) adopt a coiled-coil conformation. Serine 264 carries the post-translational modification Phosphoserine. The tract at residues 328 to 349 (KEDREKEQLSSLQEELESLLEK) is disordered.

Belongs to the TAF7 family. In terms of assembly, component of the TFIID basal transcription factor complex, composed of TATA-box-binding protein TBP, and a number of TBP-associated factors (TAFs), including TAF1, TAF2, TAF3, TAF4, TAF5, TAF6, TAF7, TAF8, TAF9, TAF10, TAF11, TAF12 and TAF13. Part of a TFIID-containing RNA polymerase II pre-initiation complex that is composed of TBP and at least GTF2A1, GTF2A2, GTF2E1, GTF2E2, GTF2F1, GTF2H2, GTF2H3, GTF2H4, GTF2H5, GTF2B, TCEA1, ERCC2, ERCC3, TAF1, TAF2, TAF3, TAF4, TAF5, TAF6, TAF7, TAF8, TAF9, TAF10, TAF11, TAF12 and TAF13. Interacts with TAF1; the interaction is direct. Interacts with TAF1, TAF5, TAF11, TAF12, and TAF13, but not with TAF10 or TBP. Component of some MLL1/MLL complex, at least composed of the core components KMT2A/MLL1, ASH2L, HCFC1/HCF1, WDR5 and RBBP5, as well as the facultative components BACC1, CHD8, E2F6, HSP70, INO80C, KANSL1, LAS1L, MAX, MCRS1, MGA, MYST1/MOF, PELP1, PHF20, PRP31, RING2, RUVB1/TIP49A, RUVB2/TIP49B, SENP3, TAF1, TAF4, TAF6, TAF7, TAF9 and TEX10. Interacts with CIITA and TAF1 and inhibits their acetyltransferase activity, and behaving as a repressor of CIITA- and TAF1-regulated promoters. Post-translationally, phosphorylated by CIITA. Phosphorylation at Ser-264 by TAF1 in early G1 phase disrupts binding to TAF1. Ubiquitinated by TRIM26; leading to proteasomal degradation. As to expression, ubiquitous.

Its subcellular location is the nucleus. In terms of biological role, the TFIID basal transcription factor complex plays a major role in the initiation of RNA polymerase II (Pol II)-dependent transcription. TFIID recognizes and binds promoters with or without a TATA box via its subunit TBP, a TATA-box-binding protein, and promotes assembly of the pre-initiation complex (PIC). The TFIID complex consists of TBP and TBP-associated factors (TAFs), including TAF1, TAF2, TAF3, TAF4, TAF5, TAF6, TAF7, TAF8, TAF9, TAF10, TAF11, TAF12 and TAF13. TAF7 forms a promoter DNA binding subcomplex of TFIID, together with TAF1 and TAF2. Part of a TFIID complex containing TAF10 (TFIID alpha) and a TFIID complex lacking TAF10 (TFIID beta). The chain is Transcription initiation factor TFIID subunit 7 (TAF7) from Homo sapiens (Human).